Here is a 190-residue protein sequence, read N- to C-terminus: Elongation factor P-like protein (190 aa).

It belongs to the elongation factor P family.

In Photorhabdus laumondii subsp. laumondii (strain DSM 15139 / CIP 105565 / TT01) (Photorhabdus luminescens subsp. laumondii), this protein is Elongation factor P-like protein.